A 511-amino-acid chain; its full sequence is Sodium/proline symporter (511 aa).

13 helical membrane passes run 16-36 (WQTYIMIAVYFLILMLLAFTY), 53-73 (IGPYITALSAGASDMSGWMIM), 84-104 (LSAMWITIGLTLGAYINYFVV), 138-158 (IISGLIIVVFFTLYTHSGFVS), 173-193 (FGLILVAFIVIFYTFFGGYLA), 199-219 (FFQGVIMLIAMVMVPIVAMMN), 239-259 (LFKGLSFIGIISLFSWGLGYF), 285-305 (ISWMAVGLLGAVAVGLTGIAF), 326-346 (VLFHPLVGGFLLAAILAAIMS), 380-400 (FVMIGRLSVLVVAIVAIAIAW), 409-429 (LVGNAWAGFGASFSPLVLFAL), 437-457 (AGAVSGMVSGALVVIVWIAWI), and 466-486 (IFGLYEIIPGFIVSVIVTYVV).

Belongs to the sodium:solute symporter (SSF) (TC 2.A.21) family.

The protein localises to the cell membrane. It catalyses the reaction L-proline(in) + Na(+)(in) = L-proline(out) + Na(+)(out). In terms of biological role, catalyzes the sodium-dependent uptake of extracellular L-proline. Since most S.aureus strains are L-proline auxotrophs, this transporter may aid the bacterial persistence during an infection of tissues with low proline concentrations. The chain is Sodium/proline symporter from Staphylococcus aureus.